A 348-amino-acid polypeptide reads, in one-letter code: MPGKQSEEGPAEAGASEDSEEEGLGGLTLEELQQGQEAARALEDMMTLSAQTLVRAEVDELYEEVRPLGQGCYGRVLLVTHRQKGTPLALKQLPKPRTSLRGFLYEFCVGLSLGAHSAIVTAYGIGIESAHSYSFLTEPVLHGDLMAFIQPKVGLPQPAVHRCAAQLASALEYIHARGLVYRDLKPENVLVCDPACRRFKLTDFGHTRPRGTLLRLAGPPIPYTAPELCAPPPLPEGLPIQPALDAWALGVLLFCLLTGYFPWDRPLAEADPFYEDFLIWQASGQPRDRPQPWFGLAAAADALLRGLLDPHPRRRSAVIAIREHLGRPWRQREGEAEAVGAVEEEAGQ.

The segment at 1–25 is disordered; the sequence is MPGKQSEEGPAEAGASEDSEEEGLG. The region spanning 62-330 is the Protein kinase domain; the sequence is YEEVRPLGQG…IREHLGRPWR (269 aa). Residues 68–76 and Lys91 contribute to the ATP site; that span reads LGQGCYGRV. The Proton acceptor role is filled by Asp183.

It belongs to the protein kinase superfamily. Ser/Thr protein kinase family. STKL subfamily.

The catalysed reaction is L-seryl-[protein] + ATP = O-phospho-L-seryl-[protein] + ADP + H(+). The enzyme catalyses L-threonyl-[protein] + ATP = O-phospho-L-threonyl-[protein] + ADP + H(+). This Homo sapiens (Human) protein is Serine/threonine-protein kinase SBK2 (SBK2).